We begin with the raw amino-acid sequence, 364 residues long: Sec-independent protein translocase protein TatC (364 aa).

7 consecutive transmembrane segments (helical) span residues 42 to 62 (IALLAFAIAGVVCFIFEPRIF), 107 to 127 (MIAAVVVSSPVWLYQLWSFIT), 139 to 159 (LTFVGVSLVLFATGAVFAYLT), 160 to 180 (LSTGLGLLLGFGGNGLVSVLD), 194 to 214 (IFGLSFEVPLLVMMLNLAGIV), 225 to 245 (PEIFLVFVFAAVVTPSQDPFT), and 246 to 266 (MLALGLPMVLLYEVALIIGWL). Residues 277–364 (TSPYADLDDD…STDVTHGDIT (88 aa)) are disordered. Over residues 282–295 (DLDDDETSPLDFDD) the composition is skewed to acidic residues. Over residues 301–320 (AASAGPAATATSPGTANPPG) the composition is skewed to low complexity. The segment covering 324 to 344 (PPGTANPVGTANPVGTGSSTP) has biased composition (polar residues).

The protein belongs to the TatC family. The Tat system comprises two distinct complexes: a TatABC complex, containing multiple copies of TatA, TatB and TatC subunits, and a separate TatA complex, containing only TatA subunits. Substrates initially bind to the TatABC complex, which probably triggers association of the separate TatA complex to form the active translocon.

Its subcellular location is the cell membrane. Its function is as follows. Part of the twin-arginine translocation (Tat) system that transports large folded proteins containing a characteristic twin-arginine motif in their signal peptide across membranes. Together with TatB, TatC is part of a receptor directly interacting with Tat signal peptides. The polypeptide is Sec-independent protein translocase protein TatC (Frankia casuarinae (strain DSM 45818 / CECT 9043 / HFP020203 / CcI3)).